Reading from the N-terminus, the 277-residue chain is Thiazole synthase (277 aa).

Lys107 (schiff-base intermediate with DXP) is an active-site residue. 1-deoxy-D-xylulose 5-phosphate is bound by residues Gly168, 194 to 195 (AG), and 216 to 217 (AS).

Belongs to the ThiG family. As to quaternary structure, homotetramer. Forms heterodimers with either ThiH or ThiS.

It localises to the cytoplasm. It catalyses the reaction [ThiS sulfur-carrier protein]-C-terminal-Gly-aminoethanethioate + 2-iminoacetate + 1-deoxy-D-xylulose 5-phosphate = [ThiS sulfur-carrier protein]-C-terminal Gly-Gly + 2-[(2R,5Z)-2-carboxy-4-methylthiazol-5(2H)-ylidene]ethyl phosphate + 2 H2O + H(+). The protein operates within cofactor biosynthesis; thiamine diphosphate biosynthesis. In terms of biological role, catalyzes the rearrangement of 1-deoxy-D-xylulose 5-phosphate (DXP) to produce the thiazole phosphate moiety of thiamine. Sulfur is provided by the thiocarboxylate moiety of the carrier protein ThiS. In vitro, sulfur can be provided by H(2)S. In Cutibacterium acnes (strain DSM 16379 / KPA171202) (Propionibacterium acnes), this protein is Thiazole synthase.